Consider the following 360-residue polypeptide: Homoserine O-succinyltransferase (360 aa).

The active-site Acyl-thioester intermediate is the cysteine 146. The substrate site is built by lysine 167 and serine 196. Catalysis depends on histidine 239, which acts as the Proton acceptor. The active site involves glutamate 241. Arginine 253 is a binding site for substrate.

Belongs to the MetA family.

Its subcellular location is the cytoplasm. It carries out the reaction L-homoserine + succinyl-CoA = O-succinyl-L-homoserine + CoA. Its pathway is amino-acid biosynthesis; L-methionine biosynthesis via de novo pathway; O-succinyl-L-homoserine from L-homoserine: step 1/1. Its function is as follows. Transfers a succinyl group from succinyl-CoA to L-homoserine, forming succinyl-L-homoserine. In vitro, can also use glutaryl-CoA as acyl donor. The protein is Homoserine O-succinyltransferase of Thiothrix nivea (strain ATCC 35100 / DSM 5205 / JP2).